The primary structure comprises 1228 residues: Apical endosomal glycoprotein (1228 aa).

A signal peptide spans 1–21 (MCLPSHLLSTWVLFMAAQSLG). At 23 to 1159 (TWLPNHCRSP…GEVAAPVSVP (1137 aa)) the chain is on the extracellular side. The region spanning 28–49 (HCRSPIKAVCNFVCDCGDCSDE) is the LDL-receptor class A 1; truncated domain. The region spanning 65–223 (FTCNFEQDSC…DDVEFRDCGL (159 aa)) is the MAM 1 domain. A glycan (N-linked (GlcNAc...) asparagine) is linked at Asn-204. The LDL-receptor class A 2 domain occupies 229 to 267 (RCPLGHHHCQNKACVEPHQLCDGEDNCGDRSDEDPLICS). 3 disulfides stabilise this stretch: Cys-230-Cys-242, Cys-237-Cys-255, and Cys-249-Cys-266. The 157-residue stretch at 270–426 (MATDFETGLG…DLIMSSHCML (157 aa)) folds into the MAM 2 domain. Asn-290 and Asn-340 each carry an N-linked (GlcNAc...) asparagine glycan. The LDL-receptor class A 3 domain occupies 457–492 (TCEPGHLSCGDLCVPPEQLCDFQKHCAEGEDEHKCG). 3 disulfides stabilise this stretch: Cys-458–Cys-469, Cys-465–Cys-482, and Cys-476–Cys-491. 4 MAM domains span residues 492–649 (GTTD…DCNP), 659–815 (LSCN…PCWA), 817–975 (KSCS…PCPQ), and 977–1144 (GSCD…QCKQ). Residue Asn-641 is glycosylated (N-linked (GlcNAc...) asparagine). An N-linked (GlcNAc...) asparagine glycan is attached at Asn-841. The chain crosses the membrane as a helical span at residues 1160–1180 (VAVGGALLFFMFLVLMGLGGW). Residues 1181-1228 (HWLQKQHCPGQRSTDAAASGFANILFNADHVTLPESITSNPQSPPDLA) are Cytoplasmic-facing.

The protein localises to the membrane. Functionally, probably involved in the sorting and selective transport of receptors and ligands across polarized epithelia. In Mus musculus (Mouse), this protein is Apical endosomal glycoprotein.